We begin with the raw amino-acid sequence, 212 residues long: Interleukin-6 (212 aa).

The N-terminal stretch at Met1 to Pro27 is a signal peptide. A disulfide bridge links Cys72 with Cys78. An N-linked (GlcNAc...) asparagine glycan is attached at Asn73. Ser81 bears the Phosphoserine mark. Cys101 and Cys111 are joined by a disulfide. N-linked (GlcNAc...) asparagine glycosylation occurs at Asn172.

Belongs to the IL-6 superfamily. In terms of assembly, component of a hexamer of two molecules each of IL6, IL6R and IL6ST; first binds to IL6R to associate with the signaling subunit IL6ST. Interacts with IL6R (via the N-terminal ectodomain); this interaction may be affected by IL6R-binding with SORL1, hence decreasing IL6 cis signaling. Interacts with SORL1 (via the N-terminal ectodomain); this interaction leads to IL6 internalization and lysosomal degradation. May form a trimeric complex with the soluble SORL1 ectodomain and soluble IL6R receptor; this interaction might stabilize circulating IL6, hence promoting IL6 trans signaling.

It is found in the secreted. Its function is as follows. Cytokine with a wide variety of biological functions in immunity, tissue regeneration, and metabolism. Binds to IL6R, then the complex associates to the signaling subunit IL6ST/gp130 to trigger the intracellular IL6-signaling pathway. The interaction with the membrane-bound IL6R and IL6ST stimulates 'classic signaling', whereas the binding of IL6 and soluble IL6R to IL6ST stimulates 'trans-signaling'. Alternatively, 'cluster signaling' occurs when membrane-bound IL6:IL6R complexes on transmitter cells activate IL6ST receptors on neighboring receiver cells. Functionally, IL6 is a potent inducer of the acute phase response. Rapid production of IL6 contributes to host defense during infection and tissue injury, but excessive IL6 synthesis is involved in disease pathology. In the innate immune response, is synthesized by myeloid cells, such as macrophages and dendritic cells, upon recognition of pathogens through toll-like receptors (TLRs) at the site of infection or tissue injury. In the adaptive immune response, is required for the differentiation of B cells into immunoglobulin-secreting cells. Plays a major role in the differentiation of CD4(+) T cell subsets. Essential factor for the development of T follicular helper (Tfh) cells that are required for the induction of germinal-center formation. Required to drive naive CD4(+) T cells to the Th17 lineage. Also required for proliferation of myeloma cells and the survival of plasmablast cells. Acts as an essential factor in bone homeostasis and on vessels directly or indirectly by induction of VEGF, resulting in increased angiogenesis activity and vascular permeability. Induces, through 'trans-signaling' and synergistically with IL1B and TNF, the production of VEGF. Involved in metabolic controls, is discharged into the bloodstream after muscle contraction increasing lipolysis and improving insulin resistance. 'Trans-signaling' in central nervous system also regulates energy and glucose homeostasis. Mediates, through GLP-1, crosstalk between insulin-sensitive tissues, intestinal L cells and pancreatic islets to adapt to changes in insulin demand. Also acts as a myokine. Plays a protective role during liver injury, being required for maintenance of tissue regeneration. Also has a pivotal role in iron metabolism by regulating HAMP/hepcidin expression upon inflammation or bacterial infection. Through activation of IL6ST-YAP-NOTCH pathway, induces inflammation-induced epithelial regeneration. The sequence is that of Interleukin-6 (IL6) from Macaca mulatta (Rhesus macaque).